We begin with the raw amino-acid sequence, 174 residues long: 3-hydroxydecanoyl-[acyl-carrier-protein] dehydratase (174 aa).

Histidine 73 is a catalytic residue.

This sequence belongs to the thioester dehydratase family. FabA subfamily. As to quaternary structure, homodimer.

The protein resides in the cytoplasm. The enzyme catalyses a (3R)-hydroxyacyl-[ACP] = a (2E)-enoyl-[ACP] + H2O. The catalysed reaction is (3R)-hydroxydecanoyl-[ACP] = (2E)-decenoyl-[ACP] + H2O. It carries out the reaction (2E)-decenoyl-[ACP] = (3Z)-decenoyl-[ACP]. The protein operates within lipid metabolism; fatty acid biosynthesis. Its function is as follows. Necessary for the introduction of cis unsaturation into fatty acids. Catalyzes the dehydration of (3R)-3-hydroxydecanoyl-ACP to E-(2)-decenoyl-ACP and then its isomerization to Z-(3)-decenoyl-ACP. Can catalyze the dehydratase reaction for beta-hydroxyacyl-ACPs with saturated chain lengths up to 16:0, being most active on intermediate chain length. This Cellvibrio japonicus (strain Ueda107) (Pseudomonas fluorescens subsp. cellulosa) protein is 3-hydroxydecanoyl-[acyl-carrier-protein] dehydratase.